The sequence spans 210 residues: Thiamine-phosphate synthase (210 aa).

4-amino-2-methyl-5-(diphosphooxymethyl)pyrimidine is bound by residues 39–43 and Asn-71; that span reads QLREK. Residues Asp-72 and Asp-91 each coordinate Mg(2+). Ser-110 is a 4-amino-2-methyl-5-(diphosphooxymethyl)pyrimidine binding site. 134–136 contributes to the 2-[(2R,5Z)-2-carboxy-4-methylthiazol-5(2H)-ylidene]ethyl phosphate binding site; that stretch reads TPT. 4-amino-2-methyl-5-(diphosphooxymethyl)pyrimidine is bound at residue Lys-137. Gly-163 contributes to the 2-[(2R,5Z)-2-carboxy-4-methylthiazol-5(2H)-ylidene]ethyl phosphate binding site.

The protein belongs to the thiamine-phosphate synthase family. Mg(2+) serves as cofactor.

It carries out the reaction 2-[(2R,5Z)-2-carboxy-4-methylthiazol-5(2H)-ylidene]ethyl phosphate + 4-amino-2-methyl-5-(diphosphooxymethyl)pyrimidine + 2 H(+) = thiamine phosphate + CO2 + diphosphate. The enzyme catalyses 2-(2-carboxy-4-methylthiazol-5-yl)ethyl phosphate + 4-amino-2-methyl-5-(diphosphooxymethyl)pyrimidine + 2 H(+) = thiamine phosphate + CO2 + diphosphate. It catalyses the reaction 4-methyl-5-(2-phosphooxyethyl)-thiazole + 4-amino-2-methyl-5-(diphosphooxymethyl)pyrimidine + H(+) = thiamine phosphate + diphosphate. It functions in the pathway cofactor biosynthesis; thiamine diphosphate biosynthesis; thiamine phosphate from 4-amino-2-methyl-5-diphosphomethylpyrimidine and 4-methyl-5-(2-phosphoethyl)-thiazole: step 1/1. Its function is as follows. Condenses 4-methyl-5-(beta-hydroxyethyl)thiazole monophosphate (THZ-P) and 2-methyl-4-amino-5-hydroxymethyl pyrimidine pyrophosphate (HMP-PP) to form thiamine monophosphate (TMP). The protein is Thiamine-phosphate synthase of Campylobacter jejuni (strain RM1221).